The chain runs to 233 residues: Large ribosomal subunit protein uL1 (233 aa).

This sequence belongs to the universal ribosomal protein uL1 family. Part of the 50S ribosomal subunit.

In terms of biological role, binds directly to 23S rRNA. The L1 stalk is quite mobile in the ribosome, and is involved in E site tRNA release. Protein L1 is also a translational repressor protein, it controls the translation of the L11 operon by binding to its mRNA. The protein is Large ribosomal subunit protein uL1 of Shewanella sp. (strain MR-4).